Consider the following 748-residue polypeptide: Cytosolic phospholipase A2 (748 aa).

The segment at 1 to 178 (MSFIDPYQHI…MRKLLGPKKS (178 aa)) is phospholipid binding. The residue at position 2 (serine 2) is a Phosphoserine. Positions 6–122 (PYQHIIVEHQ…KVGEKKEVPF (117 aa)) constitute a C2 domain. 7 residues coordinate Ca(2+): aspartate 40, threonine 41, aspartate 43, asparagine 65, aspartate 93, alanine 94, and asparagine 95. A PLA2c domain is found at 138-739 (VCSSPDLRFS…SNVEARRFFN (602 aa)). Catalysis depends on serine 228, which acts as the Nucleophile. Threonine 268 carries the post-translational modification Phosphothreonine. Residues 428 to 458 (HIVSNDSSDSDDESQEPKGTEGEDAEREYQN) form a disordered region. 3 positions are modified to phosphoserine: serine 434, serine 435, and serine 437. Basic and acidic residues predominate over residues 442 to 458 (QEPKGTEGEDAEREYQN). Residue serine 505 is modified to Phosphoserine; by MAPK. Serine 514 is subject to Phosphoserine. Lysine 540 participates in a covalent cross-link: Glycyl lysine isopeptide (Lys-Gly) (interchain with G-Cter in SUMO2). Catalysis depends on aspartate 548, which acts as the Proton acceptor. Lysine 605 is covalently cross-linked (Glycyl lysine isopeptide (Lys-Gly) (interchain with G-Cter in SUMO2)). Phosphoserine occurs at positions 726 and 728.

Interacts with KAT5. Phosphorylated at both Ser-505 and Ser-726 in response to mitogenic stimuli.

Its subcellular location is the cytoplasm. It is found in the golgi apparatus membrane. The protein resides in the nucleus envelope. It catalyses the reaction a 1,2-diacyl-sn-glycero-3-phosphocholine + H2O = a 1-acyl-sn-glycero-3-phosphocholine + a fatty acid + H(+). The enzyme catalyses a 1-O-alkyl-2-acyl-sn-glycero-3-phosphocholine + H2O = a 1-O-alkyl-sn-glycero-3-phosphocholine + a fatty acid + H(+). It carries out the reaction a 1-acyl-sn-glycero-3-phosphocholine + H2O = sn-glycerol 3-phosphocholine + a fatty acid + H(+). The catalysed reaction is 1-hexadecanoyl-2-(5Z,8Z,11Z,14Z-eicosatetraenoyl)-sn-glycero-3-phosphocholine + H2O = 1-hexadecanoyl-sn-glycero-3-phosphocholine + (5Z,8Z,11Z,14Z)-eicosatetraenoate + H(+). It catalyses the reaction 1,2-di-(5Z,8Z,11Z,14Z-eicosatetraenoyl)-sn-glycero-3-phosphocholine + H2O = 1-(5Z,8Z,11Z,14Z-eicosatetraenoyl)-sn-glycero-3-phosphocholine + (5Z,8Z,11Z,14Z)-eicosatetraenoate + H(+). The enzyme catalyses 1-octadecanoyl-2-(5Z,8Z,11Z,14Z-eicosatetraenoyl)-sn-glycero-3-phosphocholine + H2O = 1-octadecanoyl-sn-glycero-3-phosphocholine + (5Z,8Z,11Z,14Z)-eicosatetraenoate + H(+). It carries out the reaction 1-hexadecanoyl-2-(9Z,12Z-octadecadienoyl)-sn-glycero-3-phosphocholine + H2O = (9Z,12Z)-octadecadienoate + 1-hexadecanoyl-sn-glycero-3-phosphocholine + H(+). The catalysed reaction is 1-octadecanoyl-2-(9Z,12Z,15Z-octadecatrienoyl)-sn-glycero-3-phosphocholine + H2O = (9Z,12Z,15Z)-octadecatrienoate + 1-octadecanoyl-sn-glycero-3-phosphocholine + H(+). It catalyses the reaction 1-(5Z,8Z,11Z,14Z-eicosatetraenoyl)-2-hexadecanoyl-sn-glycero-3-phosphocholine + H2O = 1-(5Z,8Z,11Z,14Z-eicosatetraenoyl)-sn-glycero-3-phosphocholine + hexadecanoate + H(+). The enzyme catalyses 1-O-hexadecyl-2-(5Z,8Z,11Z,14Z)-eicosatetraenoyl-sn-glycero-3-phosphocholine + H2O = 1-O-hexadecyl-sn-glycero-3-phosphocholine + (5Z,8Z,11Z,14Z)-eicosatetraenoate + H(+). It carries out the reaction 1,2-di-(9Z-octadecenoyl)-sn-glycero-3-phospho-(1'-sn-glycerol) + H2O = 1-(9Z-octadecenoyl)-sn-glycero-3-phospho-(1'-sn-glycerol) + (9Z)-octadecenoate + H(+). The catalysed reaction is 1-octadecanoyl-2-(5Z,8Z,11Z,14Z-eicosatetraenoyl)-sn-glycero-3-phosphate + H2O = 1-octadecanoyl-sn-glycero-3-phosphate + (5Z,8Z,11Z,14Z)-eicosatetraenoate + H(+). It catalyses the reaction 1-hexadecanoyl-sn-glycero-3-phosphocholine + H2O = sn-glycerol 3-phosphocholine + hexadecanoate + H(+). The enzyme catalyses 2-(prostaglandin E2)-sn-glycero-3-phosphoethanolamine + H2O = sn-glycero-3-phosphoethanolamine + prostaglandin E2 + H(+). It carries out the reaction 2-[(15S)-hydroxy-(5Z,8Z,11Z,13E)-eicosatetraenoyl]-sn-glycero-3-phosphocholine + H2O = (15S)-hydroxy-(5Z,8Z,11Z,13E)-eicosatetraenoate + sn-glycerol 3-phosphocholine + H(+). The catalysed reaction is 2-[(15R)-hydroxy-(5Z,8Z,11Z,13E)-eicosatetraenoyl]-sn-glycero-3-phosphocholine + H2O = (15R)-hydroxy-(5Z,8Z,11Z,13E)-eicosatetraenoate + sn-glycerol 3-phosphocholine + H(+). It catalyses the reaction 2-(prostaglandin E2)-sn-glycero-3-phosphocholine + H2O = prostaglandin E2 + sn-glycerol 3-phosphocholine + H(+). The enzyme catalyses 2-[(11R)-hydroxy-(5Z,8Z,12E,14Z)-eicosatetraenoyl]-sn-glycero-3-phosphocholine + H2O = (11R)-hydroxy-(5Z,8Z,12E,14Z)-eicosatetraenoate + sn-glycerol 3-phosphocholine + H(+). It carries out the reaction 1-(5Z,8Z,11Z,14Z-eicosatetraenoyl)-2-O-hexadecyl-sn-glycero-3-phosphocholine + H2O = 2-O-hexadecyl-sn-glycero-3-phosphocholine + (5Z,8Z,11Z,14Z)-eicosatetraenoate + H(+). The catalysed reaction is 1-octadecanoyl-2-(5Z,8Z,11Z,14Z-eicosatetraenoyl)-sn-glycero-3-phosphocholine + glycerol = 1-(5Z,8Z,11Z,14Z-eicosatetraenoyl)-glycerol + 1-octadecanoyl-sn-glycero-3-phosphocholine. It catalyses the reaction 1-octadecanoyl-2-(9Z,12Z,15Z-octadecatrienoyl)-sn-glycero-3-phosphocholine + glycerol = 1-(9Z,12Z,15Z-octadecatrienoyl)-glycerol + 1-octadecanoyl-sn-glycero-3-phosphocholine. The protein operates within membrane lipid metabolism; glycerophospholipid metabolism. It participates in lipid metabolism; arachidonate metabolism. Its pathway is lipid metabolism; prostaglandin biosynthesis. It functions in the pathway lipid metabolism; leukotriene B4 biosynthesis. Its activity is regulated as follows. Activated by cytosolic calcium, which is necessary for binding to membrane lipids. Activated by phosphorylation in response to mitogenic stimuli. Functionally, has primarily calcium-dependent phospholipase and lysophospholipase activities, with a major role in membrane lipid remodeling and biosynthesis of lipid mediators of the inflammatory response. Plays an important role in embryo implantation and parturition through its ability to trigger prostanoid production. Preferentially hydrolyzes the ester bond of the fatty acyl group attached at sn-2 position of phospholipids (phospholipase A2 activity). Selectively hydrolyzes sn-2 arachidonoyl group from membrane phospholipids, providing the precursor for eicosanoid biosynthesis via the cyclooxygenase pathway. In an alternative pathway of eicosanoid biosynthesis, hydrolyzes sn-2 fatty acyl chain of eicosanoid lysophopholipids to release free bioactive eicosanoids. Hydrolyzes the ester bond of the fatty acyl group attached at sn-1 position of phospholipids (phospholipase A1 activity) only if an ether linkage rather than an ester linkage is present at the sn-2 position. This hydrolysis is not stereospecific. Has calcium-independent phospholipase A2 and lysophospholipase activities in the presence of phosphoinositides. Has O-acyltransferase activity. Catalyzes the transfer of fatty acyl chains from phospholipids to a primary hydroxyl group of glycerol (sn-1 or sn-3), potentially contributing to monoacylglycerol synthesis. This Oryctolagus cuniculus (Rabbit) protein is Cytosolic phospholipase A2 (PLA2G4A).